The primary structure comprises 253 residues: Indole-3-glycerol phosphate synthase (253 aa).

Belongs to the TrpC family.

The enzyme catalyses 1-(2-carboxyphenylamino)-1-deoxy-D-ribulose 5-phosphate + H(+) = (1S,2R)-1-C-(indol-3-yl)glycerol 3-phosphate + CO2 + H2O. The protein operates within amino-acid biosynthesis; L-tryptophan biosynthesis; L-tryptophan from chorismate: step 4/5. The polypeptide is Indole-3-glycerol phosphate synthase (Bacillus cereus (strain ATCC 14579 / DSM 31 / CCUG 7414 / JCM 2152 / NBRC 15305 / NCIMB 9373 / NCTC 2599 / NRRL B-3711)).